The following is a 217-amino-acid chain: Peptide deformylase (217 aa).

Residues cysteine 91 and histidine 133 each contribute to the Fe cation site. Residue glutamate 134 is part of the active site. A Fe cation-binding site is contributed by histidine 137. Residues 153 to 217 (VSEDGEEEEE…RRGSAAAKEE (65 aa)) form a disordered region. The segment covering 155-176 (EDGEEEEEAEVAEVMPEPEAEG) has biased composition (acidic residues). Over residues 177–192 (AGEPSAEGAGQAAAEA) the composition is skewed to low complexity. A compositionally biased stretch (basic and acidic residues) spans 206 to 217 (GERRGSAAAKEE).

The protein belongs to the polypeptide deformylase family. It depends on Fe(2+) as a cofactor.

The enzyme catalyses N-terminal N-formyl-L-methionyl-[peptide] + H2O = N-terminal L-methionyl-[peptide] + formate. Functionally, removes the formyl group from the N-terminal Met of newly synthesized proteins. Requires at least a dipeptide for an efficient rate of reaction. N-terminal L-methionine is a prerequisite for activity but the enzyme has broad specificity at other positions. This Symbiobacterium thermophilum (strain DSM 24528 / JCM 14929 / IAM 14863 / T) protein is Peptide deformylase.